An 824-amino-acid polypeptide reads, in one-letter code: Disintegrin and metalloproteinase domain-containing protein 8 (824 aa).

Residues 1–16 (MRGLGLWLLGAMMLPA) form the signal peptide. At 17–655 (IAPSRPWALM…EVHAASGSLP (639 aa)) the chain is on the extracellular side. 2 N-linked (GlcNAc...) asparagine glycosylation sites follow: Asn67 and Asn91. The 201-residue stretch at 200-400 (RYVELYVVVD…PQSVCLANAP (201 aa)) folds into the Peptidase M12B domain. Disulfide bonds link Cys310–Cys395, Cys351–Cys379, Cys353–Cys362, Cys435–Cys457, Cys448–Cys454, Cys466–Cys486, Cys473–Cys503, Cys498–Cys508, Cys566–Cys613, Cys613–Cys623, Cys617–Cys629, and Cys631–Cys640. Residue His334 participates in Zn(2+) binding. Glu335 is an active-site residue. 2 residues coordinate Zn(2+): His338 and His344. In terms of domain architecture, Disintegrin spans 408 to 494 (GPVCGNLFVE…ECPEDAFQEN (87 aa)). Asn436 carries N-linked (GlcNAc...) asparagine glycosylation. Positions 609 to 641 (RSSNCSAQCHNHGVCNHKQECHCHAGWAPPHCA) constitute an EGF-like domain. Asn612 is a glycosylation site (N-linked (GlcNAc...) asparagine). The chain crosses the membrane as a helical span at residues 656 to 676 (VFVVVVLVLLAVVLVTLAGII). Topologically, residues 677–824 (VYRKARSRIL…KQGAGAPTAP (148 aa)) are cytoplasmic. 2 disordered regions span residues 710–756 (VPAK…PVTV) and 776–824 (KPTF…PTAP). Positions 747-756 (RPPPAPPVTV) are enriched in pro residues. The span at 788 to 804 (PGAGAANPGPAEGAVGP) shows a compositional bias: low complexity.

As to quaternary structure, interacts with FST3. The cofactor is Zn(2+). As to expression, expressed on neutrophils and monocytes.

Its subcellular location is the membrane. In terms of biological role, possible involvement in extravasation of leukocytes. This Homo sapiens (Human) protein is Disintegrin and metalloproteinase domain-containing protein 8 (ADAM8).